Reading from the N-terminus, the 548-residue chain is MSLLRSASLLLVVVTAALPPCTLGYSLHDGSRLDDVIAEFTAERRPRRLATPAQRRLMGLTEEQHKTVQFYLDKLRELGNRRHPESYNKDSPKNEAYKWRKQMRDDLKTELLNPEKYGRHFEGDIILFPEQAKQIYENALKTGQRRVKRKFIGSDLRRWDPTRPIIYSFDGSHTSREQRIIELALEHRHNITCLNFVRNDNANKGNRIVFTDVDGCASNVGRHPLGEEQLVSLAPECIRLGVIAHEVAHALGFWHEQSRPDRDQFVNVRWENIDKDSKGQFLKEDPDDVDNAGVPYDYGSIMHYRSKAFSRYDDLYTISTFVTDYQKTIGQRDQLSFNDIRLMNKIYCSNVCSRKLPCQRGGYTDPRRCDRCRCPDGFTGQFCEQVMPGYGAVCGGRIQVNSGWTRFSSPGYPREFKEGQECSWLLVAPPGQVVEMQFIGEFEMYCKVRHSLCMDYVEVRNSTDFANTGMRYCCYGTPSTSIRSATTDLVVLFRSFYRGGRGFEARARALPANGQWASWTPWTPCTASCGACGSRMRTRVCPHGACPC.

The N-terminal stretch at 1-24 (MSLLRSASLLLVVVTAALPPCTLG) is a signal peptide. A propeptide spanning residues 25–150 (YSLHDGSRLD…KTGQRRVKRK (126 aa)) is cleaved from the precursor. The region spanning 150 to 349 (KFIGSDLRRW…IRLMNKIYCS (200 aa)) is the Peptidase M12A domain. A glycan (N-linked (GlcNAc...) asparagine) is linked at Asn190. Intrachain disulfides connect Cys193–Cys348, Cys216–Cys237, Cys352–Cys372, Cys374–Cys383, and Cys394–Cys422. Residue His245 coordinates Zn(2+). Glu246 is an active-site residue. His249 and His255 together coordinate Zn(2+). Residues 344 to 384 (NKIYCSNVCSRKLPCQRGGYTDPRRCDRCRCPDGFTGQFCE) form the EGF-like domain. One can recognise a CUB domain in the interval 394-510 (CGGRIQVNSG…RGFEARARAL (117 aa)). N-linked (GlcNAc...) asparagine glycosylation occurs at Asn461. Residues 513 to 547 (NGQWASWTPWTPCTASCGACGSRMRTRVCPHGACP) enclose the TSP type-1 domain. Disulfide bonds link Cys525–Cys546, Cys529–Cys546, and Cys541–Cys546.

Zn(2+) serves as cofactor.

The protein resides in the secreted. In terms of biological role, metalloprotease which cleaves the carboxyl terminus of procollagens to mature collagens. Probably involved in cuticular collagen maturation. This chain is Zinc metalloproteinase dpy-31, found in Haemonchus contortus (Barber pole worm).